Consider the following 727-residue polypeptide: MLRIPVRKALVVLSKSPKGCVRTTATAASNLIEVFVDGQSVMVEPGTTVLQACEKVGMQIPRFCYHERLSVAGNCRMCLVEIEKAPKVVAACAMPVMKGWNILTNSKKSKKAREGVMEFLLANHPLDCPICDQGGECDLQDQSMMFGNDRSRFLEGKRAVEDKNIGPLVKTIMTRCIQCTRCIRFASEIAGVDDLGTTGRGNDMQVGTYIEKMFMSELSGNIIDICPVGALTSKPYAFTARPWETRKTESIDVMDAVGSNIVVSTRTGEVMRILPRMHEDINEEWISDKTRFAYDGLKRQRLTEPMVRNEKGLLTYTSWEDALSRVAGMLQTFQGKDVAAIAGGLVDAEALVALKDLLNRVDSDTLCTEEVFPTAGAGTDLRSNYLLNTTIAGVEEADVVLLVGTNPRFEAPLFNARLRKSWLHNDLKVALIGSPVDLTYTYDHLGDSPKILQDIASGSHPFSQVLKEAKKPMVVLGSSALQRNDGAAILAAVSSIAQKIRMTSGVTGDWKVMNILHRIASQVAALDLGYKPGVEAIRKNPPKVLFLLGADGGCITRQDLPKDCFIIYQGHHGDVGAPIADVILPGAAYTEKSATYVNTEGRAQQTKVAVTPPGLAREDWKIIRALSEIAGMTLPYDTLDQVRNRLEEVSPNLVRYDDIEGANYFQQANELSKLVNQQLLADPLVPPQLTIKDFYMTDSISRASQTMAKCVKAVTEGAQAVEEPSIC.

The N-terminal 23 residues, 1 to 23 (MLRIPVRKALVVLSKSPKGCVRT), are a transit peptide targeting the mitochondrion. One can recognise a 2Fe-2S ferredoxin-type domain in the interval 30–108 (NLIEVFVDGQ…GWNILTNSKK (79 aa)). Positions 64, 75, and 78 each coordinate [2Fe-2S] cluster. K84 carries the post-translational modification N6-acetyllysine. C92 provides a ligand contact to [2Fe-2S] cluster. One can recognise a 4Fe-4S His(Cys)3-ligated-type domain in the interval 108–147 (KSKKAREGVMEFLLANHPLDCPICDQGGECDLQDQSMMFG). Residues H124, C128, C131, C137, C176, C179, C182, and C226 each contribute to the [4Fe-4S] cluster site. The 4Fe-4S Mo/W bis-MGD-type domain occupies 245–301 (TRKTESIDVMDAVGSNIVVSTRTGEVMRILPRMHEDINEEWISDKTRFAYDGLKRQR). An N6-acetyllysine mark is found at K467, K499, and K709.

It belongs to the complex I 75 kDa subunit family. In terms of assembly, core subunit of respiratory chain NADH dehydrogenase (Complex I) which is composed of 45 different subunits. This is the largest subunit of complex I and it is a component of the iron-sulfur (IP) fragment of the enzyme. Complex I associates with ubiquinol-cytochrome reductase complex (Complex III) to form supercomplexes. Interacts with MDM2 and AKAP1. The cofactor is [2Fe-2S] cluster. It depends on [4Fe-4S] cluster as a cofactor.

The protein resides in the mitochondrion inner membrane. The catalysed reaction is a ubiquinone + NADH + 5 H(+)(in) = a ubiquinol + NAD(+) + 4 H(+)(out). In terms of biological role, core subunit of the mitochondrial membrane respiratory chain NADH dehydrogenase (Complex I) which catalyzes electron transfer from NADH through the respiratory chain, using ubiquinone as an electron acceptor. Essential for catalysing the entry and efficient transfer of electrons within complex I. Plays a key role in the assembly and stability of complex I and participates in the association of complex I with ubiquinol-cytochrome reductase complex (Complex III) to form supercomplexes. The chain is NADH-ubiquinone oxidoreductase 75 kDa subunit, mitochondrial (NDUFS1) from Pan troglodytes (Chimpanzee).